Reading from the N-terminus, the 507-residue chain is tRNA (guanine(10)-N(2))-methyltransferase TRMT11 (507 aa).

The segment covering 459-475 (EKTKKKEQKKKSVENHL) has biased composition (basic and acidic residues). The segment at 459 to 507 (EKTKKKEQKKKSVENHLKSKNNNDVINNNSNDTNSNNNCNNENNIENQK) is disordered. A compositionally biased stretch (low complexity) spans 480-507 (NNDVINNNSNDTNSNNNCNNENNIENQK).

Belongs to the class I-like SAM-binding methyltransferase superfamily. TRM11 methyltransferase family. As to quaternary structure, part of the heterodimeric TRMT11-TRM112 methyltransferase complex; this complex forms an active tRNA methyltransferase, where TRMT112 acts as an activator of the catalytic subunit TRMT11.

The protein localises to the cytoplasm. The enzyme catalyses guanosine(10) in tRNA + S-adenosyl-L-methionine = N(2)-methylguanosine(10) in tRNA + S-adenosyl-L-homocysteine + H(+). Its function is as follows. Catalytic subunit of the TRMT11-TRM112 methyltransferase complex, that specifically mediates the S-adenosyl-L-methionine-dependent N(2)-methylation of guanosine nucleotide at position 10 (m2G10) in tRNAs. This is one of the major tRNA (guanine-N(2))-methyltransferases. This is tRNA (guanine(10)-N(2))-methyltransferase TRMT11 (trmt11) from Dictyostelium discoideum (Social amoeba).